Here is a 367-residue protein sequence, read N- to C-terminus: MSDARRYHALPSPFPMKRGGQLQGARLAYETWGRLSPGCDNAVLILTGLSPSAHAASHPDGDTSPGWWEGMLGPGKAIDTDRWYVICVNSLGSDKGSTGPASPDPATGAPYRLSFPELALEDVASAAHDLVKALGIARLACLIGCSMGGMSALAYMLQYEGEVEAHISVDTAPQAQPFAIAIRSLQREAIRLDPNWQDGHYTDAAYPETGMAMARKLGVITYRSAMEWNGRFARIRLDGDQRPDEPFAREFQVESYLEHHAQRFVRRFDPACYLYLTRASDWFDVAEYGEGSVMQGLARIHVRRALVIGVSTDILFPLEQQQQIAEGLQAAGAEVDFVALDSPQGHDAFLVDIENYSAAIGGFLRTL.

The AB hydrolase-1 domain maps to 41–351; that stretch reads NAVLILTGLS…SPQGHDAFLV (311 aa). Residues 48-51 form an important for substrate specificity region; that stretch reads GLSP. The active-site Nucleophile is S146. A substrate-binding site is contributed by R215. Residues D313 and H346 contribute to the active site. D347 lines the substrate pocket.

This sequence belongs to the AB hydrolase superfamily. MetX family. As to quaternary structure, homodimer.

It is found in the cytoplasm. The enzyme catalyses succinyl-CoA + L-serine = O-succinyl-L-serine + CoA. It catalyses the reaction L-homoserine + succinyl-CoA = O-succinyl-L-homoserine + CoA. Its pathway is amino-acid biosynthesis; L-cysteine biosynthesis; L-cysteine from L-serine: step 1/2. In terms of biological role, transfers a succinyl group from succinyl-CoA to L-serine, forming succinyl-L-serine. In vitro, also has homoserine succinyl transferase activity. This chain is Serine O-succinyltransferase, found in Frateuria aurantia (strain ATCC 33424 / DSM 6220 / KCTC 2777 / LMG 1558 / NBRC 3245 / NCIMB 13370) (Acetobacter aurantius).